A 681-amino-acid chain; its full sequence is Peroxisomal acyl-coenzyme A oxidase 2 (681 aa).

The disordered stretch occupies residues 1 to 28 (MGNPGDRVSLGETWSREVHPDIDSERHS). Position 9 is a phosphoserine (Ser-9). Thr-13 is subject to Phosphothreonine. Residues 14–28 (WSREVHPDIDSERHS) are compositionally biased toward basic and acidic residues. An N6-succinyllysine mark is found at Lys-66, Lys-137, Lys-303, Lys-453, Lys-561, and Lys-667. The Microbody targeting signal signature appears at 679 to 681 (PKL).

It belongs to the acyl-CoA oxidase family. As to quaternary structure, homodimer. It depends on FAD as a cofactor. Acetylation of Lys-667 is observed in liver mitochondria from fasted mice but not from fed mice.

The protein resides in the peroxisome. It catalyses the reaction (25R)-3alpha,7alpha,12alpha-trihydroxy-5beta-cholestan-26-oyl-CoA + A + H2O = (24R,25R)-3alpha,7alpha,12alpha,24-tetrahydroxy-5beta-cholestan-26-oyl-CoA + AH2. It carries out the reaction (25S)-3alpha,7alpha,12alpha-trihydroxy-5beta-cholestan-26-oyl-CoA + O2 = (24E)-3alpha,7alpha,12alpha-trihydroxy-5beta-cholest-24-en-26-oyl-CoA + H2O2. Oxidizes the CoA esters of the bile acid intermediates di- and tri-hydroxycoprostanic acids. Capable of oxidizing short as well as long chain 2-methyl branched fatty acids. The polypeptide is Peroxisomal acyl-coenzyme A oxidase 2 (Mus musculus (Mouse)).